The sequence spans 1388 residues: DNA-directed RNA polymerase subunit beta (1388 aa).

The protein belongs to the RNA polymerase beta chain family. The RNAP catalytic core consists of 2 alpha, 1 beta, 1 beta' and 1 omega subunit. When a sigma factor is associated with the core the holoenzyme is formed, which can initiate transcription.

The enzyme catalyses RNA(n) + a ribonucleoside 5'-triphosphate = RNA(n+1) + diphosphate. DNA-dependent RNA polymerase catalyzes the transcription of DNA into RNA using the four ribonucleoside triphosphates as substrates. This Xylella fastidiosa (strain 9a5c) protein is DNA-directed RNA polymerase subunit beta.